The primary structure comprises 422 residues: Serine--tRNA ligase (422 aa).

226 to 228 (TSE) is a binding site for L-serine. Residues 257–259 (RRE) and V273 contribute to the ATP site. E280 provides a ligand contact to L-serine. Residue 344–347 (ELTS) participates in ATP binding. Residue T379 coordinates L-serine.

It belongs to the class-II aminoacyl-tRNA synthetase family. Type-1 seryl-tRNA synthetase subfamily. Homodimer. The tRNA molecule binds across the dimer.

It localises to the cytoplasm. The catalysed reaction is tRNA(Ser) + L-serine + ATP = L-seryl-tRNA(Ser) + AMP + diphosphate + H(+). It carries out the reaction tRNA(Sec) + L-serine + ATP = L-seryl-tRNA(Sec) + AMP + diphosphate + H(+). It functions in the pathway aminoacyl-tRNA biosynthesis; selenocysteinyl-tRNA(Sec) biosynthesis; L-seryl-tRNA(Sec) from L-serine and tRNA(Sec): step 1/1. Its function is as follows. Catalyzes the attachment of serine to tRNA(Ser). Is also able to aminoacylate tRNA(Sec) with serine, to form the misacylated tRNA L-seryl-tRNA(Sec), which will be further converted into selenocysteinyl-tRNA(Sec). The sequence is that of Serine--tRNA ligase from Corynebacterium glutamicum (strain ATCC 13032 / DSM 20300 / JCM 1318 / BCRC 11384 / CCUG 27702 / LMG 3730 / NBRC 12168 / NCIMB 10025 / NRRL B-2784 / 534).